The sequence spans 271 residues: Methylthioribulose-1-phosphate dehydratase (271 aa).

Residue Cys123 coordinates substrate. Positions 141 and 143 each coordinate Zn(2+). The Proton donor/acceptor role is filled by Glu166. His231 lines the Zn(2+) pocket.

It belongs to the aldolase class II family. MtnB subfamily. Zn(2+) is required as a cofactor.

Its subcellular location is the cytoplasm. The catalysed reaction is 5-(methylsulfanyl)-D-ribulose 1-phosphate = 5-methylsulfanyl-2,3-dioxopentyl phosphate + H2O. The protein operates within amino-acid biosynthesis; L-methionine biosynthesis via salvage pathway; L-methionine from S-methyl-5-thio-alpha-D-ribose 1-phosphate: step 2/6. In terms of biological role, catalyzes the dehydration of methylthioribulose-1-phosphate (MTRu-1-P) into 2,3-diketo-5-methylthiopentyl-1-phosphate (DK-MTP-1-P). In Candida dubliniensis (strain CD36 / ATCC MYA-646 / CBS 7987 / NCPF 3949 / NRRL Y-17841) (Yeast), this protein is Methylthioribulose-1-phosphate dehydratase.